We begin with the raw amino-acid sequence, 367 residues long: GTP cyclohydrolase FolE2 (367 aa).

Belongs to the GTP cyclohydrolase IV family.

It carries out the reaction GTP + H2O = 7,8-dihydroneopterin 3'-triphosphate + formate + H(+). Its pathway is cofactor biosynthesis; 7,8-dihydroneopterin triphosphate biosynthesis; 7,8-dihydroneopterin triphosphate from GTP: step 1/1. Its function is as follows. Converts GTP to 7,8-dihydroneopterin triphosphate. The polypeptide is GTP cyclohydrolase FolE2 (Roseobacter denitrificans (strain ATCC 33942 / OCh 114) (Erythrobacter sp. (strain OCh 114))).